The primary structure comprises 524 residues: RNA-splicing ligase RtcB homolog 2 (524 aa).

The Mn(2+) site is built by aspartate 141, cysteine 144, histidine 249, histidine 281, and histidine 372. Residue 248–252 (NHYLE) coordinates GMP. Residues 372–373 (HN), 421–424 (GGSM), serine 428, 447–450 (HGAG), and lysine 523 contribute to the GMP site. The GMP-histidine intermediate role is filled by histidine 447.

The protein belongs to the RtcB family. As to quaternary structure, catalytic component of the tRNA-splicing ligase complex. Requires Mn(2+) as cofactor.

It catalyses the reaction a 3'-end 3'-phospho-ribonucleotide-RNA + a 5'-end dephospho-ribonucleoside-RNA + GTP = a ribonucleotidyl-ribonucleotide-RNA + GMP + diphosphate. It carries out the reaction a 3'-end 2',3'-cyclophospho-ribonucleotide-RNA + a 5'-end dephospho-ribonucleoside-RNA + GTP + H2O = a ribonucleotidyl-ribonucleotide-RNA + GMP + diphosphate + H(+). Catalytic subunit of the tRNA-splicing ligase complex that acts by directly joining spliced tRNA halves to mature-sized tRNAs by incorporating the precursor-derived splice junction phosphate into the mature tRNA as a canonical 3',5'-phosphodiester. May act as an RNA ligase with broad substrate specificity, and may function toward other RNAs. The chain is RNA-splicing ligase RtcB homolog 2 from Entamoeba dispar (strain ATCC PRA-260 / SAW760).